Consider the following 766-residue polypeptide: Leucine-rich repeat and fibronectin type III domain-containing protein 1 (766 aa).

The signal sequence occupies residues 1–31 (MAPGPFSSGLLSPPPAALPFLLLLWAGASRG). Residues 32–65 (QPCPGRCICQNVAPTLTMLCAKTGLLFVPPAIDR) enclose the LRRNT domain. Residues 32–536 (QPCPGRCICQ…LRAHFLGGTM (505 aa)) are Extracellular-facing. LRR repeat units follow at residues 66–87 (RVVELRLTDNFIAAVRRRDFAN), 90–111 (SLVHLTLSRNTIGQVAAGAFAD), 114–135 (ALRALHLDSNRLAEVRGDQLRG), 138–159 (NLRHLILGNNQIRKVESAAFDA), 163–184 (TVEDLDLSYNNLEALPWEAVGQ), 187–208 (NLNTLTLDHNLIDHIAEGTFVQ), and 211–232 (KLVRLDMTSNRLHKLPPDGLFL). Asn87 carries N-linked (GlcNAc...) asparagine glycosylation. One can recognise an LRRCT domain in the interval 252 to 298 (NPLHCNCELLWLRRLTREDDLETCATPEHLTDRYFWSIPEEEFLCEP). In terms of domain architecture, Ig-like spans 299–386 (PLITRQAGGR…GEATAPVEVC (88 aa)). Cys321 and Cys370 are disulfide-bonded. Residue Asn343 is glycosylated (N-linked (GlcNAc...) asparagine). Residues 397-422 (PAAPPPLTEPGSSDIATPGRPGANDS) form a disordered region. Residues 424-520 (TERRLVAAEL…GCVQFTTAGD (97 aa)) enclose the Fibronectin type-III domain. Residues 537–557 (IIAIGGVIVASVLVFIVLLMI) traverse the membrane as a helical segment. At 558–766 (RYKVYGDGDS…STEWMLESTV (209 aa)) the chain is on the cytoplasmic side. Disordered stretches follow at residues 568-601 (RRIKGTSRSPPRVSHVCSQTNGSSAQQASAPPAP) and 646-742 (CLLP…GEDG). At Ser713 the chain carries Phosphoserine. Positions 714–727 (YPRRARRTKRHRST) are enriched in basic residues.

It belongs to the LRFN family. Forms heteromeric complexes with LRFN2, LRFN4 and LRFN5; binding to LRFN2 and LRFN5 may be weaker than that to LRFN4. Also interacts with LRFN3. Forms homomeric complexes, but not across cell junctions. Interacts with DLG1, DLG2 and DLG4, but not with MAGI2, not CASK. Interacts with DLG3. Interacts with 2 AMPA receptor subunits GRIA1 and GRIA2 and NMDA receptor subunit GRIN1. Post-translationally, glycosylated. In terms of tissue distribution, mainly expressed in brain (at protein level) and testis. In brain, found in cerebral cortex (including pyramidal neurons), hippocampus (including CA3 and CA1 neurons), dentate gyrus, cerebellum (including Purkinje neurons) (at protein level) (at protein level). Also expressed in the olfactory bulb.

It localises to the membrane. Its subcellular location is the synapse. The protein resides in the postsynaptic density membrane. Promotes neurite outgrowth in hippocampal neurons. Involved in the regulation of the differentiation and maintenance of excitatory synapses. Induces the clustering of excitatory postsynaptic proteins, including DLG4, DLGAP1, GRIA1 and GRIN1. The chain is Leucine-rich repeat and fibronectin type III domain-containing protein 1 (Lrfn1) from Rattus norvegicus (Rat).